A 343-amino-acid polypeptide reads, in one-letter code: Glyceraldehyde-3-phosphate dehydrogenase (343 aa).

Residues 13–14 and Gly112 contribute to the NAD(+) site; that span reads TI. 141-143 lines the D-glyceraldehyde 3-phosphate pocket; sequence SCN. The active-site Nucleophile is the Cys142. Arg170 is a binding site for NAD(+). 196 to 197 contacts D-glyceraldehyde 3-phosphate; the sequence is HA. Gln303 serves as a coordination point for NAD(+).

Belongs to the glyceraldehyde-3-phosphate dehydrogenase family. Homotetramer.

Its subcellular location is the cytoplasm. The enzyme catalyses D-glyceraldehyde 3-phosphate + phosphate + NADP(+) = (2R)-3-phospho-glyceroyl phosphate + NADPH + H(+). The catalysed reaction is D-glyceraldehyde 3-phosphate + phosphate + NAD(+) = (2R)-3-phospho-glyceroyl phosphate + NADH + H(+). The protein operates within carbohydrate degradation; glycolysis; pyruvate from D-glyceraldehyde 3-phosphate: step 1/5. In Aeropyrum pernix (strain ATCC 700893 / DSM 11879 / JCM 9820 / NBRC 100138 / K1), this protein is Glyceraldehyde-3-phosphate dehydrogenase (gap).